A 278-amino-acid polypeptide reads, in one-letter code: Orotidine 5'-phosphate decarboxylase (278 aa).

Lys96 (proton donor) is an active-site residue.

The protein belongs to the OMP decarboxylase family. Type 2 subfamily.

It catalyses the reaction orotidine 5'-phosphate + H(+) = UMP + CO2. It functions in the pathway pyrimidine metabolism; UMP biosynthesis via de novo pathway; UMP from orotate: step 2/2. The protein is Orotidine 5'-phosphate decarboxylase (pyrF) of Streptomyces coelicolor (strain ATCC BAA-471 / A3(2) / M145).